Consider the following 802-residue polypeptide: DNA mismatch repair protein MutS (802 aa).

Residue 617 to 624 participates in ATP binding; it reads GPNMGGKS.

It belongs to the DNA mismatch repair MutS family.

Functionally, this protein is involved in the repair of mismatches in DNA. It is possible that it carries out the mismatch recognition step. This protein has a weak ATPase activity. The protein is DNA mismatch repair protein MutS of Buchnera aphidicola subsp. Acyrthosiphon pisum (strain Tuc7).